The following is a 102-amino-acid chain: Cytochrome c3 (102 aa).

Positions 26, 29, 34, 37, 38, 39, 50, 55, 56, 73, 81, 84, 85, 95, 98, and 99 each coordinate heme c.

Requires heme as cofactor.

The protein resides in the periplasm. Its function is as follows. Participates in sulfate respiration coupled with phosphorylation by transferring electrons from the enzyme dehydrogenase to ferredoxin. The chain is Cytochrome c3 from Desulfovibrio desulfuricans.